The sequence spans 122 residues: Nitrogen fixation nifHD region GlnB-like protein 2 (122 aa).

It belongs to the P(II) protein family.

Functionally, could be involved in the regulation of nitrogen fixation. The chain is Nitrogen fixation nifHD region GlnB-like protein 2 (glnBB) from Methanobacterium ivanovii.